The chain runs to 101 residues: 2-amino-4-ketopentanoate thiolase alpha subunit (101 aa).

It belongs to the OrtA family. Heterodimer with OrtB.

It catalyses the reaction D-alanine + acetyl-CoA = (2R)-2-amino-4-oxopentanoate + CoA. With respect to regulation, completely inhibited by p-chloromercuribenzoate (p-ClHgBzO) and acetyl-CoA, and partially inhibited by N-ethylmaleimide. In terms of biological role, involved in the ornithine fermentation pathway. Catalyzes the thiolytic cleavage of 2-amino-4-ketopentanoate (AKP) with coenzyme A (CoA) to form acetyl-CoA and alanine. It is strictly specific for AKP. The protein is 2-amino-4-ketopentanoate thiolase alpha subunit of Acetoanaerobium sticklandii (strain ATCC 12662 / DSM 519 / JCM 1433 / CCUG 9281 / NCIMB 10654 / HF) (Clostridium sticklandii).